A 508-amino-acid chain; its full sequence is Hydroxymethylglutaryl-CoA synthase, mitochondrial (508 aa).

The N-terminal 37 residues, 1-37, are a transit peptide targeting the mitochondrion; it reads MQRLLAPARRVLQVKRAMQETSLTPAHLLSAAQQRFS. Lys52 is modified (N6-succinyllysine). The (3S)-3-hydroxy-3-methylglutaryl-CoA site is built by Glu80 and Ala81. 2 positions are modified to N6-acetyllysine; alternate: Lys83 and Lys118. N6-succinyllysine; alternate is present on residues Lys83 and Lys118. The Proton donor/acceptor role is filled by Glu132. (3S)-3-hydroxy-3-methylglutaryl-CoA-binding residues include Cys166, Asn204, and Thr208. Cys166 functions as the Acyl-thioester intermediate in the catalytic mechanism. Lys221 bears the N6-succinyllysine mark. Lys243 is subject to N6-acetyllysine. Lys256 is modified (N6-acetyllysine; alternate). Lys256 carries the N6-succinyllysine; alternate modification. (3S)-3-hydroxy-3-methylglutaryl-CoA-binding residues include Ser258 and His301. His301 serves as the catalytic Proton donor/acceptor. An N6-acetyllysine modification is found at Lys306. A (3S)-3-hydroxy-3-methylglutaryl-CoA-binding site is contributed by Lys310. An N6-acetyllysine; alternate mark is found at Lys310 and Lys327. 2 positions are modified to N6-succinyllysine; alternate: Lys310 and Lys327. Lys333 carries the post-translational modification N6-succinyllysine. Residues Lys342, Lys350, Lys354, and Lys358 each carry the N6-acetyllysine; alternate modification. An N6-succinyllysine; alternate mark is found at Lys342, Lys350, Lys354, and Lys358. (3S)-3-hydroxy-3-methylglutaryl-CoA contacts are provided by Asn380 and Ser414. At Lys427 the chain carries N6-acetyllysine. A Phosphoserine modification is found at Ser433. Lys437 carries the post-translational modification N6-acetyllysine. The residue at position 440 (Ser440) is a Phosphoserine. An N6-acetyllysine; alternate modification is found at Lys447. Residue Lys447 is modified to N6-succinyllysine; alternate. At Ser456 the chain carries Phosphoserine. Lys473 is modified (N6-acetyllysine; alternate). Lys473 carries the N6-succinyllysine; alternate modification. At Ser477 the chain carries Phosphoserine.

Belongs to the thiolase-like superfamily. HMG-CoA synthase family. Homodimer. Post-translationally, acetylation of Lys-427 is observed in liver mitochondria from fasted mice but not from fed mice. In terms of processing, succinylated. Desuccinylated by SIRT5. Succinylation, at least at Lys-83 and Lys-310, inhibits the enzymatic activity. In terms of tissue distribution, liver and kidney.

The protein resides in the mitochondrion. The catalysed reaction is acetoacetyl-CoA + acetyl-CoA + H2O = (3S)-3-hydroxy-3-methylglutaryl-CoA + CoA + H(+). It participates in metabolic intermediate biosynthesis; (R)-mevalonate biosynthesis; (R)-mevalonate from acetyl-CoA: step 2/3. Catalyzes the first irreversible step in ketogenesis, condensing acetyl-CoA to acetoacetyl-CoA to form HMG-CoA, which is converted by HMG-CoA reductase (HMGCR) into mevalonate. In Mus musculus (Mouse), this protein is Hydroxymethylglutaryl-CoA synthase, mitochondrial (Hmgcs2).